Consider the following 505-residue polypeptide: Deoxyguanosinetriphosphate triphosphohydrolase (505 aa).

In terms of domain architecture, HD spans 66-273; sequence RLTHSMEVQQ…MEAADDISYC (208 aa).

The protein belongs to the dGTPase family. Type 1 subfamily. Homotetramer. It depends on Mg(2+) as a cofactor.

It catalyses the reaction dGTP + H2O = 2'-deoxyguanosine + triphosphate + H(+). In terms of biological role, dGTPase preferentially hydrolyzes dGTP over the other canonical NTPs. In Escherichia fergusonii (strain ATCC 35469 / DSM 13698 / CCUG 18766 / IAM 14443 / JCM 21226 / LMG 7866 / NBRC 102419 / NCTC 12128 / CDC 0568-73), this protein is Deoxyguanosinetriphosphate triphosphohydrolase.